Reading from the N-terminus, the 193-residue chain is ATP synthase subunit b 2 (193 aa).

A helical membrane pass occupies residues 44–64; it reads IFWLVLTLLAIYFVLTKIALP.

The protein belongs to the ATPase B chain family. In terms of assembly, F-type ATPases have 2 components, F(1) - the catalytic core - and F(0) - the membrane proton channel. F(1) has five subunits: alpha(3), beta(3), gamma(1), delta(1), epsilon(1). F(0) has three main subunits: a(1), b(2) and c(10-14). The alpha and beta chains form an alternating ring which encloses part of the gamma chain. F(1) is attached to F(0) by a central stalk formed by the gamma and epsilon chains, while a peripheral stalk is formed by the delta and b chains.

The protein localises to the cell inner membrane. F(1)F(0) ATP synthase produces ATP from ADP in the presence of a proton or sodium gradient. F-type ATPases consist of two structural domains, F(1) containing the extramembraneous catalytic core and F(0) containing the membrane proton channel, linked together by a central stalk and a peripheral stalk. During catalysis, ATP synthesis in the catalytic domain of F(1) is coupled via a rotary mechanism of the central stalk subunits to proton translocation. Functionally, component of the F(0) channel, it forms part of the peripheral stalk, linking F(1) to F(0). The b'-subunit is a diverged and duplicated form of b found in plants and photosynthetic bacteria. The polypeptide is ATP synthase subunit b 2 (atpF2) (Jannaschia sp. (strain CCS1)).